Consider the following 228-residue polypeptide: MNLATQIRGGLIVSCQAPADSPLAAPEIIAAMAKAAVLRGAVAVRINTPAHIQAVRQAVNVPIIGLWKQTLPAYPVYITPRFADAVAVAAAGADIIALDATARSRPEPLQDLIQRIHNELGKPVMADIDSLENAAAAVAAGADWVGTTLFGYTETTAHTPPPSWSLLSQLVEHLSVPILSEGGIASPTMAAKALGLGAWAVVVGTDITGIDLKVQQYVAALKANTDLS.

The protein belongs to the NanE family.

The catalysed reaction is an N-acyl-D-glucosamine 6-phosphate = an N-acyl-D-mannosamine 6-phosphate. Its pathway is amino-sugar metabolism; N-acetylneuraminate degradation; D-fructose 6-phosphate from N-acetylneuraminate: step 3/5. Its function is as follows. Converts N-acetylmannosamine-6-phosphate (ManNAc-6-P) to N-acetylglucosamine-6-phosphate (GlcNAc-6-P). This chain is Putative N-acetylmannosamine-6-phosphate 2-epimerase, found in Thermosynechococcus vestitus (strain NIES-2133 / IAM M-273 / BP-1).